Reading from the N-terminus, the 848-residue chain is Protein translocase subunit SecA (848 aa).

ATP-binding positions include glutamine 86, 104–108 (GEGKT), and aspartate 508. Zn(2+)-binding residues include cysteine 833, cysteine 835, cysteine 844, and cysteine 845.

It belongs to the SecA family. As to quaternary structure, monomer and homodimer. Part of the essential Sec protein translocation apparatus which comprises SecA, SecYEG and auxiliary proteins SecDF. Other proteins may also be involved. It depends on Zn(2+) as a cofactor.

It is found in the cell membrane. The protein localises to the cytoplasm. It carries out the reaction ATP + H2O + cellular proteinSide 1 = ADP + phosphate + cellular proteinSide 2.. Functionally, part of the Sec protein translocase complex. Interacts with the SecYEG preprotein conducting channel. Has a central role in coupling the hydrolysis of ATP to the transfer of proteins into and across the cell membrane, serving as an ATP-driven molecular motor driving the stepwise translocation of polypeptide chains across the membrane. This Caldicellulosiruptor saccharolyticus (strain ATCC 43494 / DSM 8903 / Tp8T 6331) protein is Protein translocase subunit SecA.